The chain runs to 373 residues: Beta sliding clamp (373 aa).

This sequence belongs to the beta sliding clamp family. In terms of assembly, forms a ring-shaped head-to-tail homodimer around DNA which binds and tethers DNA polymerases and other proteins to the DNA. The DNA replisome complex has a single clamp-loading complex (3 tau and 1 each of delta, delta', psi and chi subunits) which binds 3 Pol III cores (1 core on the leading strand and 2 on the lagging strand) each with a beta sliding clamp dimer. Additional proteins in the replisome are other copies of gamma, psi and chi, Ssb, DNA helicase and RNA primase.

The protein localises to the cytoplasm. In terms of biological role, confers DNA tethering and processivity to DNA polymerases and other proteins. Acts as a clamp, forming a ring around DNA (a reaction catalyzed by the clamp-loading complex) which diffuses in an ATP-independent manner freely and bidirectionally along dsDNA. Initially characterized for its ability to contact the catalytic subunit of DNA polymerase III (Pol III), a complex, multichain enzyme responsible for most of the replicative synthesis in bacteria; Pol III exhibits 3'-5' exonuclease proofreading activity. The beta chain is required for initiation of replication as well as for processivity of DNA replication. This chain is Beta sliding clamp (dnaN), found in Mycoplasmopsis pulmonis (strain UAB CTIP) (Mycoplasma pulmonis).